Here is a 219-residue protein sequence, read N- to C-terminus: Uracil-DNA glycosylase (219 aa).

The Proton acceptor role is filled by Asp61.

The protein belongs to the uracil-DNA glycosylase (UDG) superfamily. UNG family.

The protein resides in the cytoplasm. It catalyses the reaction Hydrolyzes single-stranded DNA or mismatched double-stranded DNA and polynucleotides, releasing free uracil.. Excises uracil residues from the DNA which can arise as a result of misincorporation of dUMP residues by DNA polymerase or due to deamination of cytosine. The sequence is that of Uracil-DNA glycosylase from Neisseria meningitidis serogroup C (strain 053442).